The primary structure comprises 262 residues: Small ribosomal subunit protein uS2 (262 aa).

Belongs to the universal ribosomal protein uS2 family.

This Rhodospirillum rubrum (strain ATCC 11170 / ATH 1.1.1 / DSM 467 / LMG 4362 / NCIMB 8255 / S1) protein is Small ribosomal subunit protein uS2.